Reading from the N-terminus, the 360-residue chain is S-adenosylmethionine:tRNA ribosyltransferase-isomerase (360 aa).

The protein belongs to the QueA family. As to quaternary structure, monomer.

It is found in the cytoplasm. It carries out the reaction 7-aminomethyl-7-carbaguanosine(34) in tRNA + S-adenosyl-L-methionine = epoxyqueuosine(34) in tRNA + adenine + L-methionine + 2 H(+). It participates in tRNA modification; tRNA-queuosine biosynthesis. Functionally, transfers and isomerizes the ribose moiety from AdoMet to the 7-aminomethyl group of 7-deazaguanine (preQ1-tRNA) to give epoxyqueuosine (oQ-tRNA). This Nitrobacter winogradskyi (strain ATCC 25391 / DSM 10237 / CIP 104748 / NCIMB 11846 / Nb-255) protein is S-adenosylmethionine:tRNA ribosyltransferase-isomerase.